The chain runs to 438 residues: Chromosomal replication initiator protein DnaA (438 aa).

The domain I, interacts with DnaA modulators stretch occupies residues 1–71 (MTELDSLWEA…VEIVYQRTGQ (71 aa)). Positions 71 to 101 (QEIRPDYVLATDPTPLAQTPPRPQSTFKEET) are domain II. Residues 81–100 (TDPTPLAQTPPRPQSTFKEE) form a disordered region. The domain III, AAA+ region stretch occupies residues 102-318 (PLNPEYTFQT…GALMRIRVFS (217 aa)). Positions 146, 148, 149, and 150 each coordinate ATP. The interval 319–438 (ELHQQPITLK…LVKLKNDLQA (120 aa)) is domain IV, binds dsDNA.

It belongs to the DnaA family. Oligomerizes as a right-handed, spiral filament on DNA at oriC.

It localises to the cytoplasm. Functionally, plays an essential role in the initiation and regulation of chromosomal replication. ATP-DnaA binds to the origin of replication (oriC) to initiate formation of the DNA replication initiation complex once per cell cycle. Binds the DnaA box (a 9 base pair repeat at the origin) and separates the double-stranded (ds)DNA. Forms a right-handed helical filament on oriC DNA; dsDNA binds to the exterior of the filament while single-stranded (ss)DNA is stabiized in the filament's interior. The ATP-DnaA-oriC complex binds and stabilizes one strand of the AT-rich DNA unwinding element (DUE), permitting loading of DNA polymerase. After initiation quickly degrades to an ADP-DnaA complex that is not apt for DNA replication. Binds acidic phospholipids. In Limosilactobacillus fermentum (strain NBRC 3956 / LMG 18251) (Lactobacillus fermentum), this protein is Chromosomal replication initiator protein DnaA.